The sequence spans 833 residues: Leucine--tRNA ligase (833 aa).

Positions 41–52 (PYPSGAGLHVGH) match the 'HIGH' region motif. The 'KMSKS' region signature appears at 610 to 614 (KMSKS). Lys-613 is an ATP binding site.

Belongs to the class-I aminoacyl-tRNA synthetase family.

Its subcellular location is the cytoplasm. It catalyses the reaction tRNA(Leu) + L-leucine + ATP = L-leucyl-tRNA(Leu) + AMP + diphosphate. This Streptococcus suis (strain 05ZYH33) protein is Leucine--tRNA ligase.